A 113-amino-acid polypeptide reads, in one-letter code: Tubulin-folding cofactor A (113 aa).

A disordered region spans residues 83-113 (LEETDEKEGPEIEDAKKTVADVEKQFPTEDA). Over residues 89-113 (KEGPEIEDAKKTVADVEKQFPTEDA) the composition is skewed to basic and acidic residues.

This sequence belongs to the TBCA family. As to quaternary structure, monomer. Supercomplex made of cofactors A to E. Cofactors A and D function by capturing and stabilizing tubulin in a quasi-native conformation. Cofactor E binds to the cofactor D-tubulin complex; interaction with cofactor C then causes the release of tubulin polypeptides that are committed to the native state. Interacts with TUBB9. In terms of tissue distribution, expressed in leaves, roots, flowers and stems.

Functionally, tubulin-folding protein involved in the control of the alpha-/beta-tubulin monomer balance. Functions as a reservoir of bound and non-toxic beta-tubulin. Required in the developing embryo. In Arabidopsis thaliana (Mouse-ear cress), this protein is Tubulin-folding cofactor A (TFCA).